Consider the following 156-residue polypeptide: Small ribosomal subunit protein uS7 (156 aa).

Belongs to the universal ribosomal protein uS7 family. As to quaternary structure, part of the 30S ribosomal subunit. Contacts proteins S9 and S11.

One of the primary rRNA binding proteins, it binds directly to 16S rRNA where it nucleates assembly of the head domain of the 30S subunit. Is located at the subunit interface close to the decoding center, probably blocks exit of the E-site tRNA. The polypeptide is Small ribosomal subunit protein uS7 (Rhizobium johnstonii (strain DSM 114642 / LMG 32736 / 3841) (Rhizobium leguminosarum bv. viciae)).